The sequence spans 263 residues: Putative ankyrin repeat domain-containing protein 20A12 pseudogene (263 aa).

Coiled coils occupy residues 65 to 121 and 171 to 263; these read KKDL…MLES and NQVF…IQLH.

The polypeptide is Putative ankyrin repeat domain-containing protein 20A12 pseudogene (Homo sapiens (Human)).